The primary structure comprises 132 residues: Small ribosomal subunit protein uS11 (132 aa).

This sequence belongs to the universal ribosomal protein uS11 family. In terms of assembly, part of the 30S ribosomal subunit. Interacts with proteins S7 and S18. Binds to IF-3.

In terms of biological role, located on the platform of the 30S subunit, it bridges several disparate RNA helices of the 16S rRNA. Forms part of the Shine-Dalgarno cleft in the 70S ribosome. This is Small ribosomal subunit protein uS11 from Chlamydia muridarum (strain MoPn / Nigg).